The sequence spans 404 residues: NADH-quinone oxidoreductase subunit D (404 aa).

The protein belongs to the complex I 49 kDa subunit family. NDH-1 is composed of 14 different subunits. Subunits NuoB, C, D, E, F, and G constitute the peripheral sector of the complex.

It is found in the cell inner membrane. The catalysed reaction is a quinone + NADH + 5 H(+)(in) = a quinol + NAD(+) + 4 H(+)(out). In terms of biological role, NDH-1 shuttles electrons from NADH, via FMN and iron-sulfur (Fe-S) centers, to quinones in the respiratory chain. The immediate electron acceptor for the enzyme in this species is believed to be ubiquinone. Couples the redox reaction to proton translocation (for every two electrons transferred, four hydrogen ions are translocated across the cytoplasmic membrane), and thus conserves the redox energy in a proton gradient. This Leptospira borgpetersenii serovar Hardjo-bovis (strain JB197) protein is NADH-quinone oxidoreductase subunit D.